The chain runs to 132 residues: Fatty acid-binding protein, intestinal (132 aa).

Ala-2 is subject to N-acetylalanine. Residues Trp-83 and Arg-107 each contribute to the hexadecanoate site. Tetradecanoate-binding residues include Trp-83 and Arg-107.

This sequence belongs to the calycin superfamily. Fatty-acid binding protein (FABP) family. As to expression, expressed in the small intestine. Highest expression levels in the proximal ileum.

It is found in the cytoplasm. Its function is as follows. FABPs are thought to play a role in the intracellular transport of long-chain fatty acids and their acyl-CoA esters. FABP2 is probably involved in triglyceride-rich lipoprotein synthesis. Binds saturated long-chain fatty acids with a high affinity, but binds with a lower affinity to unsaturated long-chain fatty acids. FABP2 may also help maintain energy homeostasis by functioning as a lipid sensor. This Mus musculus (Mouse) protein is Fatty acid-binding protein, intestinal (Fabp2).